Reading from the N-terminus, the 118-residue chain is Small ribosomal subunit protein bS6 (118 aa).

Belongs to the bacterial ribosomal protein bS6 family.

Functionally, binds together with bS18 to 16S ribosomal RNA. The chain is Small ribosomal subunit protein bS6 from Orientia tsutsugamushi (strain Ikeda) (Rickettsia tsutsugamushi).